The chain runs to 319 residues: L-lactate dehydrogenase (319 aa).

Residues 10–11 (RV), D32, R37, Y62, and 76–77 (GV) each bind NAD(+). Residues Q79, R85, and 117-120 (NPVD) contribute to the substrate site. Residues 115-117 (VTN) and S140 contribute to the NAD(+) site. 145–148 (DTAR) is a binding site for substrate. Beta-D-fructose 1,6-bisphosphate contacts are provided by R150 and H165. H172 acts as the Proton acceptor in catalysis. Y217 bears the Phosphotyrosine mark. T226 contacts substrate.

The protein belongs to the LDH/MDH superfamily. LDH family. In terms of assembly, homotetramer.

It localises to the cytoplasm. It carries out the reaction (S)-lactate + NAD(+) = pyruvate + NADH + H(+). Its pathway is fermentation; pyruvate fermentation to lactate; (S)-lactate from pyruvate: step 1/1. With respect to regulation, allosterically activated by fructose 1,6-bisphosphate (FBP). Inactivated by Mn(2+), Co(2+), Cd(2+) and Zn(2+). Functionally, catalyzes the conversion of lactate to pyruvate. It is stereospecific for L(+)-lactate. This chain is L-lactate dehydrogenase, found in Thermotoga maritima (strain ATCC 43589 / DSM 3109 / JCM 10099 / NBRC 100826 / MSB8).